Consider the following 277-residue polypeptide: S-formylglutathione hydrolase FrmB (277 aa).

Catalysis depends on charge relay system residues S145, D221, and H254.

Belongs to the esterase D family.

The catalysed reaction is S-formylglutathione + H2O = formate + glutathione + H(+). Its function is as follows. Serine hydrolase involved in the detoxification of formaldehyde. Hydrolyzes S-formylglutathione to glutathione and formate. The protein is S-formylglutathione hydrolase FrmB (frmB) of Escherichia coli O1:K1 / APEC.